Here is a 232-residue protein sequence, read N- to C-terminus: Small ribosomal subunit protein uS2 (232 aa).

Belongs to the universal ribosomal protein uS2 family.

The chain is Small ribosomal subunit protein uS2 from Natranaerobius thermophilus (strain ATCC BAA-1301 / DSM 18059 / JW/NM-WN-LF).